Reading from the N-terminus, the 268-residue chain is Ribosomal RNA small subunit methyltransferase A (268 aa).

Asparagine 17, leucine 19, glycine 44, glutamate 65, aspartate 89, and asparagine 110 together coordinate S-adenosyl-L-methionine.

It belongs to the class I-like SAM-binding methyltransferase superfamily. rRNA adenine N(6)-methyltransferase family. RsmA subfamily.

Its subcellular location is the cytoplasm. It carries out the reaction adenosine(1518)/adenosine(1519) in 16S rRNA + 4 S-adenosyl-L-methionine = N(6)-dimethyladenosine(1518)/N(6)-dimethyladenosine(1519) in 16S rRNA + 4 S-adenosyl-L-homocysteine + 4 H(+). In terms of biological role, specifically dimethylates two adjacent adenosines (A1518 and A1519) in the loop of a conserved hairpin near the 3'-end of 16S rRNA in the 30S particle. May play a critical role in biogenesis of 30S subunits. This chain is Ribosomal RNA small subunit methyltransferase A, found in Acidithiobacillus ferrooxidans (strain ATCC 53993 / BNL-5-31) (Leptospirillum ferrooxidans (ATCC 53993)).